The chain runs to 634 residues: Probable potassium transport system protein Kup (634 aa).

The next 12 membrane-spanning stretches (helical) occupy residues A19–L39, V62–V82, F113–P133, G150–Q170, I177–V197, I225–A245, W259–L279, L291–I311, I349–F369, Y379–W399, L406–A426, and V431–T451.

The protein belongs to the HAK/KUP transporter (TC 2.A.72) family.

It is found in the cell inner membrane. It catalyses the reaction K(+)(in) + H(+)(in) = K(+)(out) + H(+)(out). In terms of biological role, transport of potassium into the cell. Likely operates as a K(+):H(+) symporter. This is Probable potassium transport system protein Kup from Pseudomonas paraeruginosa (strain DSM 24068 / PA7) (Pseudomonas aeruginosa (strain PA7)).